Here is a 371-residue protein sequence, read N- to C-terminus: Probable alcohol acetyltransferase (371 aa).

Residues Ser-124 and His-295 each act as charge relay system in the active site. Residues 325–352 (AKALEESPKESYSRPPAHQQPLHKNDFT) are disordered. Over residues 327 to 336 (ALEESPKESY) the composition is skewed to basic and acidic residues.

This sequence belongs to the AB hydrolase superfamily.

Functionally, probable alcohol acetyltransferase that uses acetyl-CoA to synthesize acetate esters from various alcohols. Not involved in the synthesis of ethyl acetate. The chain is Probable alcohol acetyltransferase (EAT2) from Cyberlindnera fabianii (Yeast).